The sequence spans 1678 residues: Clathrin heavy chain (1678 aa).

7 WD40-like repeat regions span residues 24–67 (SFSF…RPIS), 68–107 (ADSA…MNED), 108–149 (VVFW…SSLN), 150–195 (GCQI…QAIE), 196–257 (GHAA…PEAQ), 258–301 (NDFP…ISAD), and 302–330 (TIFV…VTVD). 7 CHCR repeats span residues 538–684 (VAEE…QICV), 687–829 (ATKY…SEDI), 834–973 (ILVV…QLID), 980–1125 (LSET…VKEA), 1129–1270 (YIKA…FRLA), 1275–1421 (LHIV…LLLN), and 1424–1567 (LLVL…YDCF). The segment at 1334-1643 (REHLELFWSR…IQMEPQLMIT (310 aa)) is involved in binding clathrin light chain. Residues 1552-1677 (EELLGWFLER…AGGRNMGYPY (126 aa)) are trimerization.

This sequence belongs to the clathrin heavy chain family. Clathrin triskelions, composed of 3 heavy chains and 3 light chains, are the basic subunits of the clathrin coat. Interacts with sau.

It is found in the cytoplasmic vesicle membrane. It localises to the membrane. The protein localises to the coated pit. In terms of biological role, clathrin is the major protein of the polyhedral coat of coated pits and vesicles. This chain is Clathrin heavy chain (Chc), found in Drosophila melanogaster (Fruit fly).